We begin with the raw amino-acid sequence, 387 residues long: 3-ketoacyl-CoA thiolase (387 aa).

C91 functions as the Acyl-thioester intermediate in the catalytic mechanism. Catalysis depends on proton acceptor residues H343 and C373.

Belongs to the thiolase-like superfamily. Thiolase family. As to quaternary structure, heterotetramer of two alpha chains (FadB) and two beta chains (FadA).

The protein localises to the cytoplasm. The catalysed reaction is an acyl-CoA + acetyl-CoA = a 3-oxoacyl-CoA + CoA. It participates in lipid metabolism; fatty acid beta-oxidation. In terms of biological role, catalyzes the final step of fatty acid oxidation in which acetyl-CoA is released and the CoA ester of a fatty acid two carbons shorter is formed. In Shewanella sp. (strain MR-4), this protein is 3-ketoacyl-CoA thiolase.